Here is a 304-residue protein sequence, read N- to C-terminus: Acetyl-coenzyme A carboxylase carboxyl transferase subunit beta (304 aa).

The tract at residues 16–42 is disordered; it reads SSLPPKNSEGGLAYFDEPSPEQESTRK. The 257-residue stretch at 48–304 folds into the CoA carboxyltransferase N-terminal domain; the sequence is LWVKCPKCGE…LLRYHQEGAV (257 aa). Residues Cys-52, Cys-55, Cys-71, and Cys-74 each coordinate Zn(2+). The C4-type zinc-finger motif lies at 52-74; that stretch reads CPKCGEALFNKDLVENQRVCLTC.

This sequence belongs to the AccD/PCCB family. Acetyl-CoA carboxylase is a heterohexamer composed of biotin carboxyl carrier protein (AccB), biotin carboxylase (AccC) and two subunits each of ACCase subunit alpha (AccA) and ACCase subunit beta (AccD). Zn(2+) serves as cofactor.

The protein localises to the cytoplasm. The catalysed reaction is N(6)-carboxybiotinyl-L-lysyl-[protein] + acetyl-CoA = N(6)-biotinyl-L-lysyl-[protein] + malonyl-CoA. It participates in lipid metabolism; malonyl-CoA biosynthesis; malonyl-CoA from acetyl-CoA: step 1/1. In terms of biological role, component of the acetyl coenzyme A carboxylase (ACC) complex. Biotin carboxylase (BC) catalyzes the carboxylation of biotin on its carrier protein (BCCP) and then the CO(2) group is transferred by the transcarboxylase to acetyl-CoA to form malonyl-CoA. In Desulfitobacterium hafniense (strain Y51), this protein is Acetyl-coenzyme A carboxylase carboxyl transferase subunit beta.